Consider the following 698-residue polypeptide: D-(-)-3-hydroxybutyrate oligomer hydrolase (698 aa).

A signal peptide spans 1 to 32 (MTTIRGGSRRASLPALALLGVLLGACHSDDNA). The active-site Charge relay system is S310.

It belongs to the D-(-)-3-hydroxybutyrate oligomer hydrolase family.

It localises to the secreted. It catalyses the reaction (3R)-hydroxybutanoate dimer + H2O = 2 (R)-3-hydroxybutanoate + H(+). It participates in lipid metabolism; butanoate metabolism. Participates in the degradation of poly-3-hydroxybutyrate (PHB). It works downstream of poly(3-hydroxybutyrate) depolymerase, hydrolyzing D(-)-3-hydroxybutyrate oligomers of various length (3HB-oligomers) into 3HB-monomers. In Burkholderia thailandensis (strain ATCC 700388 / DSM 13276 / CCUG 48851 / CIP 106301 / E264), this protein is D-(-)-3-hydroxybutyrate oligomer hydrolase.